The primary structure comprises 283 residues: 4-diphosphocytidyl-2-C-methyl-D-erythritol kinase (283 aa).

Residue Lys10 is part of the active site. 99 to 109 (PMGGGLGGGSS) is an ATP binding site. The active site involves Asp141.

The protein belongs to the GHMP kinase family. IspE subfamily. As to quaternary structure, homodimer.

The catalysed reaction is 4-CDP-2-C-methyl-D-erythritol + ATP = 4-CDP-2-C-methyl-D-erythritol 2-phosphate + ADP + H(+). The protein operates within isoprenoid biosynthesis; isopentenyl diphosphate biosynthesis via DXP pathway; isopentenyl diphosphate from 1-deoxy-D-xylulose 5-phosphate: step 3/6. Functionally, catalyzes the phosphorylation of the position 2 hydroxy group of 4-diphosphocytidyl-2C-methyl-D-erythritol. This Citrobacter koseri (strain ATCC BAA-895 / CDC 4225-83 / SGSC4696) protein is 4-diphosphocytidyl-2-C-methyl-D-erythritol kinase.